The following is a 248-amino-acid chain: MKILLTNDDGVRAPGLNALAEAMTVLGQVFVIAPDREQSAVGHALTLHHPLRANKIGENIFAVDGTPTDCVNLGIHSLLSFKPDIVVSGINRGANLGDDVTYSGTVSAAMEATLMGIPAIAVSLVTSAEGTNYAAAAQFAVKLAATVREKGLPADTFLNVNVPDLPRERIRPPLVTTQGKRSYEGTIVDKVDPRGRNYYWIGTVDLNFKDIDGSDYHAVSRGHVSVTPLHLDLTNYNSIAVLKKWEIF.

4 residues coordinate a divalent metal cation: D8, D9, S39, and N91.

The protein belongs to the SurE nucleotidase family. A divalent metal cation is required as a cofactor.

It is found in the cytoplasm. The catalysed reaction is a ribonucleoside 5'-phosphate + H2O = a ribonucleoside + phosphate. In terms of biological role, nucleotidase that shows phosphatase activity on nucleoside 5'-monophosphates. In Geotalea daltonii (strain DSM 22248 / JCM 15807 / FRC-32) (Geobacter daltonii), this protein is 5'-nucleotidase SurE.